A 789-amino-acid chain; its full sequence is Ent-kaur-16-ene synthase, chloroplastic (789 aa).

The Mg(2+) site is built by Asp-536, Asp-540, Asn-680, Ser-684, and Glu-688. The DDXXD motif signature appears at Asp-536 to Asp-540.

It belongs to the terpene synthase family. It depends on Mg(2+) as a cofactor. The N-terminus is blocked. As to expression, abundant in most tissues. Present in low amounts in mature cotyledons.

It is found in the plastid. It localises to the chloroplast. It catalyses the reaction ent-copalyl diphosphate = ent-kaur-16-ene + diphosphate. It functions in the pathway plant hormone biosynthesis; gibberellin biosynthesis. Functionally, catalyzes the conversion of ent-copalyl diphosphate to the gibberellin precursor ent-kaur-16-ene. The sequence is that of Ent-kaur-16-ene synthase, chloroplastic from Cucurbita maxima (Pumpkin).